The sequence spans 73 residues: Tetrahydromethanopterin S-methyltransferase subunit G (73 aa).

A helical membrane pass occupies residues I48 to S68.

It belongs to the MtrG family. As to quaternary structure, the complex is composed of 8 subunits; MtrA, MtrB, MtrC, MtrD, MtrE, MtrF, MtrG and MtrH.

It localises to the cell membrane. The catalysed reaction is 5-methyl-5,6,7,8-tetrahydromethanopterin + coenzyme M + 2 Na(+)(in) = 5,6,7,8-tetrahydromethanopterin + methyl-coenzyme M + 2 Na(+)(out). It functions in the pathway one-carbon metabolism; methanogenesis from CO(2); methyl-coenzyme M from 5,10-methylene-5,6,7,8-tetrahydromethanopterin: step 2/2. Part of a complex that catalyzes the formation of methyl-coenzyme M and tetrahydromethanopterin from coenzyme M and methyl-tetrahydromethanopterin. This is an energy-conserving, sodium-ion translocating step. This Methanosarcina acetivorans (strain ATCC 35395 / DSM 2834 / JCM 12185 / C2A) protein is Tetrahydromethanopterin S-methyltransferase subunit G.